Reading from the N-terminus, the 325-residue chain is Malate dehydrogenase (325 aa).

9 to 15 (GAAGAIG) is an NAD(+) binding site. Substrate is bound by residues R90 and R96. Residues N103, Q110, and 127–129 (VGN) contribute to the NAD(+) site. Residues N129 and R160 each contribute to the substrate site. The active-site Proton acceptor is the H185.

Belongs to the LDH/MDH superfamily. MDH type 2 family.

It carries out the reaction (S)-malate + NAD(+) = oxaloacetate + NADH + H(+). Its function is as follows. Catalyzes the reversible oxidation of malate to oxaloacetate. The polypeptide is Malate dehydrogenase (Rubrobacter xylanophilus (strain DSM 9941 / JCM 11954 / NBRC 16129 / PRD-1)).